Reading from the N-terminus, the 243-residue chain is Peptide deformylase, mitochondrial (243 aa).

A mitochondrion-targeting transit peptide spans 1–39 (MARLWGALSLWPLWAAVPWGGAAAVGVRACSSTAAPDGV). Residues Gly71, Pro169, and Gly171 each coordinate substrate. The tract at residues 165–175 (LVTFPEGCESV) is hydrophobic dimerization interface. Residues Cys172 and His214 each coordinate Co(2+). Glu215 is a catalytic residue. His218 contacts Co(2+).

The protein belongs to the polypeptide deformylase family. In terms of assembly, homodimer. Co(2+) is required as a cofactor. In terms of tissue distribution, ubiquitous.

The protein resides in the mitochondrion. The catalysed reaction is N-terminal N-formyl-L-methionyl-[peptide] + H2O = N-terminal L-methionyl-[peptide] + formate. Its function is as follows. Removes the formyl group from the N-terminal Met of newly synthesized proteins. In Homo sapiens (Human), this protein is Peptide deformylase, mitochondrial.